The sequence spans 122 residues: Large ribosomal subunit protein uL14 (122 aa).

It belongs to the universal ribosomal protein uL14 family. In terms of assembly, part of the 50S ribosomal subunit. Forms a cluster with proteins L3 and L19. In the 70S ribosome, L14 and L19 interact and together make contacts with the 16S rRNA in bridges B5 and B8.

Binds to 23S rRNA. Forms part of two intersubunit bridges in the 70S ribosome. In Desulfitobacterium hafniense (strain DSM 10664 / DCB-2), this protein is Large ribosomal subunit protein uL14.